The sequence spans 862 residues: Protein translocase subunit SecA (862 aa).

Residues Gln-88, 106–110, and Asp-506 each bind ATP; that span reads GEGKT. 4 residues coordinate Zn(2+): Cys-839, Cys-841, Cys-850, and His-851.

Belongs to the SecA family. As to quaternary structure, monomer and homodimer. Part of the essential Sec protein translocation apparatus which comprises SecA, SecYEG and auxiliary proteins SecDF-YajC and YidC. Zn(2+) is required as a cofactor.

It localises to the cell inner membrane. Its subcellular location is the cytoplasm. It carries out the reaction ATP + H2O + cellular proteinSide 1 = ADP + phosphate + cellular proteinSide 2.. In terms of biological role, part of the Sec protein translocase complex. Interacts with the SecYEG preprotein conducting channel. Has a central role in coupling the hydrolysis of ATP to the transfer of proteins into and across the cell membrane, serving as an ATP-driven molecular motor driving the stepwise translocation of polypeptide chains across the membrane. This Campylobacter jejuni subsp. jejuni serotype O:2 (strain ATCC 700819 / NCTC 11168) protein is Protein translocase subunit SecA.